The sequence spans 256 residues: Triosephosphate isomerase (256 aa).

9-11 (NWK) lines the substrate pocket. His-95 functions as the Electrophile in the catalytic mechanism. The active-site Proton acceptor is Glu-167. Residues Gly-173, Ser-212, and 233–234 (GG) each bind substrate.

Belongs to the triosephosphate isomerase family. In terms of assembly, homodimer.

The protein localises to the cytoplasm. The enzyme catalyses D-glyceraldehyde 3-phosphate = dihydroxyacetone phosphate. Its pathway is carbohydrate biosynthesis; gluconeogenesis. The protein operates within carbohydrate degradation; glycolysis; D-glyceraldehyde 3-phosphate from glycerone phosphate: step 1/1. Involved in the gluconeogenesis. Catalyzes stereospecifically the conversion of dihydroxyacetone phosphate (DHAP) to D-glyceraldehyde-3-phosphate (G3P). The protein is Triosephosphate isomerase of Proteus mirabilis (strain HI4320).